The sequence spans 568 residues: 2-succinyl-5-enolpyruvyl-6-hydroxy-3-cyclohexene-1-carboxylate synthase (568 aa).

It belongs to the TPP enzyme family. MenD subfamily. Homodimer. The cofactor is Mg(2+). Mn(2+) is required as a cofactor. It depends on thiamine diphosphate as a cofactor.

The enzyme catalyses isochorismate + 2-oxoglutarate + H(+) = 5-enolpyruvoyl-6-hydroxy-2-succinyl-cyclohex-3-ene-1-carboxylate + CO2. It participates in quinol/quinone metabolism; 1,4-dihydroxy-2-naphthoate biosynthesis; 1,4-dihydroxy-2-naphthoate from chorismate: step 2/7. Its pathway is quinol/quinone metabolism; menaquinone biosynthesis. In terms of biological role, catalyzes the thiamine diphosphate-dependent decarboxylation of 2-oxoglutarate and the subsequent addition of the resulting succinic semialdehyde-thiamine pyrophosphate anion to isochorismate to yield 2-succinyl-5-enolpyruvyl-6-hydroxy-3-cyclohexene-1-carboxylate (SEPHCHC). In Haemophilus influenzae (strain ATCC 51907 / DSM 11121 / KW20 / Rd), this protein is 2-succinyl-5-enolpyruvyl-6-hydroxy-3-cyclohexene-1-carboxylate synthase.